Reading from the N-terminus, the 352-residue chain is Ion-translocating oxidoreductase complex subunit D (352 aa).

Helical transmembrane passes span 20–40, 42–62, 89–109, and 123–143; these read IMLL…WFFG, GTLV…ALVL, IPPL…VIIA, and PAMI…TSWL. Thr187 bears the FMN phosphoryl threonine mark. A run of 5 helical transmembrane segments spans residues 214–234, 242–262, 267–287, 301–321, and 322–342; these read ILAG…GLWL, WHIP…GWLF, LAAP…FFIL, LIFG…GGYP, and DGVA…DYYT.

Belongs to the NqrB/RnfD family. The complex is composed of six subunits: RsxA, RsxB, RsxC, RsxD, RsxE and RsxG. FMN is required as a cofactor.

Its subcellular location is the cell inner membrane. Part of a membrane-bound complex that couples electron transfer with translocation of ions across the membrane. Required to maintain the reduced state of SoxR. In Shigella sonnei (strain Ss046), this protein is Ion-translocating oxidoreductase complex subunit D.